Here is a 37-residue protein sequence, read N- to C-terminus: Cytochrome b6-f complex subunit 5 (37 aa).

The chain crosses the membrane as a helical span at residues 5–25 (LLCGIVLGLIPVTLLGLFVAA).

This sequence belongs to the PetG family. As to quaternary structure, the 4 large subunits of the cytochrome b6-f complex are cytochrome b6, subunit IV (17 kDa polypeptide, PetD), cytochrome f and the Rieske protein, while the 4 small subunits are PetG, PetL, PetM and PetN. The complex functions as a dimer.

Its subcellular location is the cellular thylakoid membrane. Functionally, component of the cytochrome b6-f complex, which mediates electron transfer between photosystem II (PSII) and photosystem I (PSI), cyclic electron flow around PSI, and state transitions. PetG is required for either the stability or assembly of the cytochrome b6-f complex. The polypeptide is Cytochrome b6-f complex subunit 5 (Synechococcus sp. (strain WH7803)).